A 280-amino-acid polypeptide reads, in one-letter code: Energy-coupling factor transporter ATP-binding protein EcfA1 (280 aa).

The 236-residue stretch at 6–241 folds into the ABC transporter domain; that stretch reads IELKNVTFRY…GDELLDLGLD (236 aa). An ATP-binding site is contributed by 41-48; sequence GHNGSGKS.

The protein belongs to the ABC transporter superfamily. Energy-coupling factor EcfA family. As to quaternary structure, forms a stable energy-coupling factor (ECF) transporter complex composed of 2 membrane-embedded substrate-binding proteins (S component), 2 ATP-binding proteins (A component) and 2 transmembrane proteins (T component).

It localises to the cell membrane. ATP-binding (A) component of a common energy-coupling factor (ECF) ABC-transporter complex. Unlike classic ABC transporters this ECF transporter provides the energy necessary to transport a number of different substrates. The sequence is that of Energy-coupling factor transporter ATP-binding protein EcfA1 from Streptococcus mutans serotype c (strain ATCC 700610 / UA159).